We begin with the raw amino-acid sequence, 147 residues long: Putative toxin MJ0142 (147 aa).

Belongs to the UPF0332 family.

Putative toxin component of a putative type VII toxin-antitoxin (TA) system. Its cognate antitoxin might be MJ0141. This chain is Putative toxin MJ0142, found in Methanocaldococcus jannaschii (strain ATCC 43067 / DSM 2661 / JAL-1 / JCM 10045 / NBRC 100440) (Methanococcus jannaschii).